Consider the following 430-residue polypeptide: Acetyl-CoA acetyltransferase FG05087, mitochondrial (430 aa).

Residues Met-1–Arg-32 constitute a mitochondrion transit peptide. Cys-122 serves as the catalytic Acyl-thioester intermediate. Tyr-217 is a binding site for K(+). A CoA-binding site is contributed by Lys-260. Ala-278 serves as a coordination point for K(+). Ser-282 provides a ligand contact to CoA. Catalysis depends on proton acceptor residues His-385 and Cys-413. Asn-414 serves as a coordination point for chloride.

Belongs to the thiolase-like superfamily. Thiolase family. Homotetramer. The cofactor is K(+).

It is found in the mitochondrion. It carries out the reaction 2 acetyl-CoA = acetoacetyl-CoA + CoA. Its function is as follows. Mitochondrial acetyl-CoA acetyltransferase that catalyzes both the formation and degradation of acetoacetyl-CoA. Seems not to be involved in ergosterol biosynthesis. Plays an important role in growth, morphogenesis and maintaining mitochondrial function including the response to oxidative stresses. The polypeptide is Acetyl-CoA acetyltransferase FG05087, mitochondrial (Gibberella zeae (strain ATCC MYA-4620 / CBS 123657 / FGSC 9075 / NRRL 31084 / PH-1) (Wheat head blight fungus)).